The primary structure comprises 347 residues: Sensor protein VraS (347 aa).

A run of 2 helical transmembrane segments spans residues 13-33 (ILVYSTFFAIFFIDKVFVNIM) and 43-63 (IFGIPVLLFLNLMVILLCIIV). The Histidine kinase domain maps to 150–341 (RLARELHDSV…RIEVKAPLNK (192 aa)).

Its subcellular location is the cell membrane. The catalysed reaction is ATP + protein L-histidine = ADP + protein N-phospho-L-histidine.. Its function is as follows. Member of the two-component regulatory system VraS/VraR involved in the control of the cell wall peptidoglycan biosynthesis. Probably activates VraR by phosphorylation. This chain is Sensor protein VraS (vraS), found in Staphylococcus saprophyticus subsp. saprophyticus (strain ATCC 15305 / DSM 20229 / NCIMB 8711 / NCTC 7292 / S-41).